A 133-amino-acid polypeptide reads, in one-letter code: Small ribosomal subunit protein uS8 (133 aa).

It belongs to the universal ribosomal protein uS8 family. Part of the 30S ribosomal subunit. Contacts proteins S5 and S12.

Its function is as follows. One of the primary rRNA binding proteins, it binds directly to 16S rRNA central domain where it helps coordinate assembly of the platform of the 30S subunit. The sequence is that of Small ribosomal subunit protein uS8 from Prochlorococcus marinus (strain AS9601).